A 409-amino-acid polypeptide reads, in one-letter code: Tyrosine--tRNA ligase (409 aa).

The 'HIGH' region motif lies at 54–63; it reads PTAPDIHLGH. The 'KMSKS' region motif lies at 238 to 242; it reads KMSKS. Position 241 (Lys-241) interacts with ATP. The S4 RNA-binding domain maps to 347-407; the sequence is QGILRILREA…GKRKFARVKL (61 aa).

It belongs to the class-I aminoacyl-tRNA synthetase family. TyrS type 2 subfamily. Homodimer.

The protein resides in the cytoplasm. It catalyses the reaction tRNA(Tyr) + L-tyrosine + ATP = L-tyrosyl-tRNA(Tyr) + AMP + diphosphate + H(+). Catalyzes the attachment of tyrosine to tRNA(Tyr) in a two-step reaction: tyrosine is first activated by ATP to form Tyr-AMP and then transferred to the acceptor end of tRNA(Tyr). The sequence is that of Tyrosine--tRNA ligase from Bordetella bronchiseptica (strain ATCC BAA-588 / NCTC 13252 / RB50) (Alcaligenes bronchisepticus).